The primary structure comprises 275 residues: Protein COFACTOR ASSEMBLY OF COMPLEX C SUBUNIT B CCB2, chloroplastic (275 aa).

The transit peptide at Met-1 to Arg-19 directs the protein to the chloroplast. Over Ala-20–Arg-65 the chain is Stromal. The helical transmembrane segment at Trp-66–Ile-86 threads the bilayer. Topologically, residues Ser-87–Ser-93 are lumenal. A helical membrane pass occupies residues Glu-94–Leu-114. Residues Lys-115–Gly-275 lie on the Stromal side of the membrane.

The protein resides in the plastid. Its subcellular location is the chloroplast thylakoid membrane. Required for the biogenesis and accumulation of native cytochrome b6 in the thylakoid membrane. Controls the conversion of apocytochrome b6 to holocytochrome b6. Required for covalent binding of the c-type heme to cytochrome b6. The polypeptide is Protein COFACTOR ASSEMBLY OF COMPLEX C SUBUNIT B CCB2, chloroplastic (Arabidopsis thaliana (Mouse-ear cress)).